Consider the following 400-residue polypeptide: Argininosuccinate synthase (400 aa).

9–17 (AYSGGLDTS) serves as a coordination point for ATP. Tyr-87 is a binding site for L-citrulline. Gly-117 lines the ATP pocket. Thr-119, Asn-123, and Asp-124 together coordinate L-aspartate. L-citrulline is bound at residue Asn-123. Positions 127, 176, 185, 261, and 273 each coordinate L-citrulline.

Belongs to the argininosuccinate synthase family. Type 1 subfamily. As to quaternary structure, homotetramer.

The protein resides in the cytoplasm. The enzyme catalyses L-citrulline + L-aspartate + ATP = 2-(N(omega)-L-arginino)succinate + AMP + diphosphate + H(+). The protein operates within amino-acid biosynthesis; L-arginine biosynthesis; L-arginine from L-ornithine and carbamoyl phosphate: step 2/3. The sequence is that of Argininosuccinate synthase from Chlorobium luteolum (strain DSM 273 / BCRC 81028 / 2530) (Pelodictyon luteolum).